Reading from the N-terminus, the 244-residue chain is Ureidoacrylate amidohydrolase RutB (244 aa).

The active-site Proton acceptor is the Asp38. Lys147 is a catalytic residue. Catalysis depends on Cys180, which acts as the Nucleophile.

Belongs to the isochorismatase family. RutB subfamily.

The enzyme catalyses (Z)-3-ureidoacrylate + H2O + H(+) = (Z)-3-aminoacrylate + NH4(+) + CO2. It catalyses the reaction (Z)-3-ureidoacrylate + H2O = (Z)-3-aminoacrylate + carbamate + H(+). The catalysed reaction is (Z)-2-methylureidoacrylate + H2O + H(+) = (Z)-2-methylaminoacrylate + NH4(+) + CO2. Its function is as follows. Hydrolyzes ureidoacrylate to form aminoacrylate and carbamate. The carbamate hydrolyzes spontaneously, thereby releasing one of the nitrogen atoms of the pyrimidine ring as ammonia and one of its carbon atoms as CO2. The polypeptide is Ureidoacrylate amidohydrolase RutB (Escherichia coli O1:K1 / APEC).